A 529-amino-acid polypeptide reads, in one-letter code: Peptide chain release factor 3 (529 aa).

Residues 10–279 (EQRRCFGIIS…ALVEMAPAPG (270 aa)) enclose the tr-type G domain. GTP-binding positions include 19–26 (SHPDAGKT), 87–91 (DTPGH), and 141–144 (NKMD).

This sequence belongs to the TRAFAC class translation factor GTPase superfamily. Classic translation factor GTPase family. PrfC subfamily.

The protein localises to the cytoplasm. Its function is as follows. Increases the formation of ribosomal termination complexes and stimulates activities of RF-1 and RF-2. It binds guanine nucleotides and has strong preference for UGA stop codons. It may interact directly with the ribosome. The stimulation of RF-1 and RF-2 is significantly reduced by GTP and GDP, but not by GMP. This Desulfatibacillum aliphaticivorans protein is Peptide chain release factor 3.